Reading from the N-terminus, the 444-residue chain is 23S rRNA (uracil(1939)-C(5))-methyltransferase RlmD (444 aa).

The TRAM domain occupies 11–70 (NSIKNHILKNIKVEKLDHRGRGLAYFQNKPLFIDGALAGELLEVQIVESKKRYSKGKIKK). Cysteine 83, cysteine 89, cysteine 92, and cysteine 171 together coordinate [4Fe-4S] cluster. Glutamine 277, phenylalanine 306, asparagine 311, glutamate 327, aspartate 354, and aspartate 376 together coordinate S-adenosyl-L-methionine. Cysteine 402 (nucleophile) is an active-site residue.

This sequence belongs to the class I-like SAM-binding methyltransferase superfamily. RNA M5U methyltransferase family. RlmD subfamily.

The enzyme catalyses uridine(1939) in 23S rRNA + S-adenosyl-L-methionine = 5-methyluridine(1939) in 23S rRNA + S-adenosyl-L-homocysteine + H(+). Functionally, catalyzes the formation of 5-methyl-uridine at position 1939 (m5U1939) in 23S rRNA. In Psychromonas ingrahamii (strain DSM 17664 / CCUG 51855 / 37), this protein is 23S rRNA (uracil(1939)-C(5))-methyltransferase RlmD.